Here is a 364-residue protein sequence, read N- to C-terminus: Transposase for insertion sequence element IS1111A (364 aa).

This sequence belongs to the transposase IS1111A/IS1328/IS1533 family.

In terms of biological role, required for the transposition of the insertion element. The chain is Transposase for insertion sequence element IS1111A from Coxiella burnetii (strain RSA 493 / Nine Mile phase I).